We begin with the raw amino-acid sequence, 142 residues long: uncharacterized protein (142 aa).

The interval 1–22 (MSGSVNQNTDQHSQDSSSTPNN) is disordered. 2 helical membrane passes run 63 to 83 (LFVM…VLLV) and 109 to 129 (IIDG…FVDL).

It is found in the membrane. This is an uncharacterized protein from Acanthamoeba polyphaga mimivirus (APMV).